The primary structure comprises 224 residues: Small ribosomal subunit protein uS3 (224 aa).

Positions 20-89 (LDEFLANYFK…NVNITVSPVP (70 aa)) constitute a KH type-2 domain.

The protein belongs to the universal ribosomal protein uS3 family. As to quaternary structure, part of the 30S ribosomal subunit.

In terms of biological role, binds the lower part of the 30S subunit head. The polypeptide is Small ribosomal subunit protein uS3 (Staphylothermus marinus (strain ATCC 43588 / DSM 3639 / JCM 9404 / F1)).